The following is a 507-amino-acid chain: tRNA (guanine(10)-N(2))-methyltransferase TRMT11 (507 aa).

A compositionally biased stretch (basic and acidic residues) spans 459–475 (EKTKKKEQKKKSVENHL). The tract at residues 459–507 (EKTKKKEQKKKSVENHLKSKNNNDVINNNSNDTNSNNNCNNENNIENQK) is disordered. The span at 480–507 (NNDVINNNSNDTNSNNNCNNENNIENQK) shows a compositional bias: low complexity.

It belongs to the class I-like SAM-binding methyltransferase superfamily. TRM11 methyltransferase family. As to quaternary structure, part of the heterodimeric TRMT11-TRM112 methyltransferase complex; this complex forms an active tRNA methyltransferase, where TRMT112 acts as an activator of the catalytic subunit TRMT11.

The protein localises to the cytoplasm. It catalyses the reaction guanosine(10) in tRNA + S-adenosyl-L-methionine = N(2)-methylguanosine(10) in tRNA + S-adenosyl-L-homocysteine + H(+). In terms of biological role, catalytic subunit of the TRMT11-TRM112 methyltransferase complex, that specifically mediates the S-adenosyl-L-methionine-dependent N(2)-methylation of guanosine nucleotide at position 10 (m2G10) in tRNAs. This is one of the major tRNA (guanine-N(2))-methyltransferases. In Dictyostelium discoideum (Social amoeba), this protein is tRNA (guanine(10)-N(2))-methyltransferase TRMT11 (trmt11).